Consider the following 77-residue polypeptide: MSFFDIFKKKKSKDVAKDRLMMMLAYERANTKIENLDEMKKDLINVVKKYLNVKDVHIKSNSNQDIETLEVEIILNK.

It belongs to the MinE family.

Functionally, prevents the cell division inhibition by proteins MinC and MinD at internal division sites while permitting inhibition at polar sites. This ensures cell division at the proper site by restricting the formation of a division septum at the midpoint of the long axis of the cell. This chain is Cell division topological specificity factor, found in Nautilia profundicola (strain ATCC BAA-1463 / DSM 18972 / AmH).